A 207-amino-acid chain; its full sequence is Holliday junction branch migration complex subunit RuvA (207 aa).

Residues 1 to 65 (MIGRIRGVIL…EDAQLLYGFN (65 aa)) are domain I. The domain II stretch occupies residues 66–143 (QKQERALFRE…KGLNGDLFEQ (78 aa)). The flexible linker stretch occupies residues 144–158 (NGDIELPASASSKAP). Positions 159-207 (SAADIEAEASAALIALGYKPQEAAKMISRVATAGADSETLIKEALRAAI) are domain III.

Belongs to the RuvA family. In terms of assembly, homotetramer. Forms an RuvA(8)-RuvB(12)-Holliday junction (HJ) complex. HJ DNA is sandwiched between 2 RuvA tetramers; dsDNA enters through RuvA and exits via RuvB. An RuvB hexamer assembles on each DNA strand where it exits the tetramer. Each RuvB hexamer is contacted by two RuvA subunits (via domain III) on 2 adjacent RuvB subunits; this complex drives branch migration. In the full resolvosome a probable DNA-RuvA(4)-RuvB(12)-RuvC(2) complex forms which resolves the HJ.

It is found in the cytoplasm. Its function is as follows. The RuvA-RuvB-RuvC complex processes Holliday junction (HJ) DNA during genetic recombination and DNA repair, while the RuvA-RuvB complex plays an important role in the rescue of blocked DNA replication forks via replication fork reversal (RFR). RuvA specifically binds to HJ cruciform DNA, conferring on it an open structure. The RuvB hexamer acts as an ATP-dependent pump, pulling dsDNA into and through the RuvAB complex. HJ branch migration allows RuvC to scan DNA until it finds its consensus sequence, where it cleaves and resolves the cruciform DNA. In Proteus mirabilis (strain HI4320), this protein is Holliday junction branch migration complex subunit RuvA.